Reading from the N-terminus, the 192-residue chain is Orotate phosphoribosyltransferase (192 aa).

Position 116–124 (116–124 (EDIVTTGLS)) interacts with 5-phospho-alpha-D-ribose 1-diphosphate. T120 and R148 together coordinate orotate.

It belongs to the purine/pyrimidine phosphoribosyltransferase family. PyrE subfamily. As to quaternary structure, homodimer. Mg(2+) is required as a cofactor.

It catalyses the reaction orotidine 5'-phosphate + diphosphate = orotate + 5-phospho-alpha-D-ribose 1-diphosphate. The protein operates within pyrimidine metabolism; UMP biosynthesis via de novo pathway; UMP from orotate: step 1/2. Catalyzes the transfer of a ribosyl phosphate group from 5-phosphoribose 1-diphosphate to orotate, leading to the formation of orotidine monophosphate (OMP). The sequence is that of Orotate phosphoribosyltransferase from Bartonella quintana (strain Toulouse) (Rochalimaea quintana).